The primary structure comprises 284 residues: D-tagatose-1,6-bisphosphate aldolase subunit GatY (284 aa).

The Proton donor role is filled by Asp-82. Residues His-83 and His-180 each contribute to the Zn(2+) site. A dihydroxyacetone phosphate-binding site is contributed by Gly-181. Residue His-208 coordinates Zn(2+). Dihydroxyacetone phosphate is bound by residues 209 to 211 (GAS) and 230 to 233 (NVAT).

Belongs to the class II fructose-bisphosphate aldolase family. TagBP aldolase GatY subfamily. Forms a complex with GatZ. The cofactor is Zn(2+).

It carries out the reaction D-tagatofuranose 1,6-bisphosphate = D-glyceraldehyde 3-phosphate + dihydroxyacetone phosphate. Its pathway is carbohydrate metabolism; D-tagatose 6-phosphate degradation; D-glyceraldehyde 3-phosphate and glycerone phosphate from D-tagatose 6-phosphate: step 2/2. Functionally, catalytic subunit of the tagatose-1,6-bisphosphate aldolase GatYZ, which catalyzes the reversible aldol condensation of dihydroxyacetone phosphate (DHAP or glycerone-phosphate) with glyceraldehyde 3-phosphate (G3P) to produce tagatose 1,6-bisphosphate (TBP). Requires GatZ subunit for full activity and stability. Is involved in the catabolism of galactitol. The polypeptide is D-tagatose-1,6-bisphosphate aldolase subunit GatY (Escherichia coli (strain K12 / MC4100 / BW2952)).